The chain runs to 370 residues: ADP-ribosylhydrolase ARH3 (370 aa).

Glutamate 35, aspartate 66, and aspartate 67 together coordinate Mg(2+). A substrate-binding site is contributed by aspartate 66. Residues 135 to 141 (RGSFGNG), histidine 171, leucine 225, and isoleucine 261 contribute to the substrate site. Mg(2+) is bound by residues aspartate 304, aspartate 306, and threonine 307.

The protein belongs to the ADP-ribosylglycohydrolase family. In terms of assembly, monomer. Requires Mg(2+) as cofactor.

It localises to the nucleus. The protein localises to the cytoplasm. The protein resides in the chromosome. It is found in the mitochondrion matrix. It carries out the reaction [(1''-&gt;2')-ADP-alpha-D-ribose](n) + H2O = [(1''-&gt;2')-ADP-alpha-D-ribose](n-1) + ADP-D-ribose. The catalysed reaction is 1''-O-acetyl-ADP-alpha-D-ribose + H2O = ADP-D-ribose + acetate + H(+). It catalyses the reaction O-(ADP-D-ribosyl)-L-seryl-[protein] + H2O = ADP-D-ribose + L-seryl-[protein]. The enzyme catalyses alpha-NAD(+) + H2O = ADP-D-ribose + nicotinamide + H(+). Its activity is regulated as follows. The protein undergoes a dramatic conformational switch from closed to open states upon substrate-binding, which enables specific substrate recognition for the 1''-O-linkage. The glutamate flap (Glu-35) blocks substrate entrance to Mg(2+) in the unliganded closed state. In presence of substrate, Glu-35 is ejected from the active site: this closed-to-open transition significantly widens the substrate-binding channel and precisely positions the scissile 1''-O-linkage for cleavage while securing tightly 2'- and 3'-hydroxyls of ADP-ribose. ADP-ribosylhydrolase that preferentially hydrolyzes the scissile alpha-O-linkage attached to the anomeric C1'' position of ADP-ribose and acts on different substrates, such as proteins ADP-ribosylated on serine and threonine, free poly(ADP-ribose) and O-acetyl-ADP-D-ribose. Specifically acts as a serine mono-ADP-ribosylhydrolase by mediating the removal of mono-ADP-ribose attached to serine residues on proteins, thereby playing a key role in DNA damage response. Serine ADP-ribosylation of proteins constitutes the primary form of ADP-ribosylation of proteins in response to DNA damage. Does not hydrolyze ADP-ribosyl-arginine, -cysteine, -diphthamide, or -asparagine bonds. Also able to degrade protein free poly(ADP-ribose), which is synthesized in response to DNA damage: free poly(ADP-ribose) acts as a potent cell death signal and its degradation by ADPRHL2 protects cells from poly(ADP-ribose)-dependent cell death, a process named parthanatos. Also hydrolyzes free poly(ADP-ribose) in mitochondria. Specifically digests O-acetyl-ADP-D-ribose, a product of deacetylation reactions catalyzed by sirtuins. Specifically degrades 1''-O-acetyl-ADP-D-ribose isomer, rather than 2''-O-acetyl-ADP-D-ribose or 3''-O-acetyl-ADP-D-ribose isomers. In Danio rerio (Zebrafish), this protein is ADP-ribosylhydrolase ARH3 (adprs).